Consider the following 41-residue polypeptide: Photosystem I reaction center subunit IX (41 aa).

The chain crosses the membrane as a helical span at residues 7–27 (YLSTAPVVATGWFIVTAALLI).

Belongs to the PsaJ family.

It is found in the plastid. It localises to the chloroplast thylakoid membrane. May help in the organization of the PsaE and PsaF subunits. The sequence is that of Photosystem I reaction center subunit IX from Tetradesmus obliquus (Green alga).